The sequence spans 347 residues: UDP-rhamnose/UDP-galactose transporter 1 (347 aa).

Transmembrane regions (helical) follow at residues 11–31 (AVSD…IIMA), 43–63 (FGFA…VGMV), 80–100 (LLWF…SLML), 103–123 (VGFY…LEWI), 132–152 (EVKA…VTDV), 159–179 (FICA…IGSL), 195–215 (APIQ…LLSG), 223–243 (MTYG…FCNI), 256–276 (SFQV…WLLF), and 285–305 (IAGM…VDIE).

It belongs to the TPT transporter family. TPT (TC 2.A.7.9) subfamily. Widely expressed in the whole plant.

The protein resides in the golgi apparatus membrane. In terms of biological role, nucleotide-sugar transporter that transports UDP-rhamnose or UDP-galactose and UMP in a strict counter-exchange mode. The chain is UDP-rhamnose/UDP-galactose transporter 1 from Arabidopsis thaliana (Mouse-ear cress).